The chain runs to 401 residues: 8-amino-7-oxononanoate synthase (401 aa).

Arginine 24 is a substrate binding site. 111–112 (GF) lines the pyridoxal 5'-phosphate pocket. Position 137 (histidine 137) interacts with substrate. Serine 183, histidine 211, and threonine 240 together coordinate pyridoxal 5'-phosphate. At lysine 243 the chain carries N6-(pyridoxal phosphate)lysine. A substrate-binding site is contributed by threonine 357.

This sequence belongs to the class-II pyridoxal-phosphate-dependent aminotransferase family. BioF subfamily. Homodimer. The cofactor is pyridoxal 5'-phosphate.

It catalyses the reaction 6-carboxyhexanoyl-[ACP] + L-alanine + H(+) = (8S)-8-amino-7-oxononanoate + holo-[ACP] + CO2. It functions in the pathway cofactor biosynthesis; biotin biosynthesis. Catalyzes the decarboxylative condensation of pimeloyl-[acyl-carrier protein] and L-alanine to produce 8-amino-7-oxononanoate (AON), [acyl-carrier protein], and carbon dioxide. In Xanthomonas campestris pv. campestris (strain 8004), this protein is 8-amino-7-oxononanoate synthase.